The primary structure comprises 84 residues: Small ribosomal subunit protein bS20 (84 aa).

This sequence belongs to the bacterial ribosomal protein bS20 family.

Functionally, binds directly to 16S ribosomal RNA. In Levilactobacillus brevis (strain ATCC 367 / BCRC 12310 / CIP 105137 / JCM 1170 / LMG 11437 / NCIMB 947 / NCTC 947) (Lactobacillus brevis), this protein is Small ribosomal subunit protein bS20.